Here is a 177-residue protein sequence, read N- to C-terminus: Dihydrofolate reductase type 9 (177 aa).

In terms of domain architecture, DHFR spans 3-167 (SLNMIVAVNK…TKLIFQIWIN (165 aa)).

The protein belongs to the dihydrofolate reductase family. In terms of assembly, homodimer.

It carries out the reaction (6S)-5,6,7,8-tetrahydrofolate + NADP(+) = 7,8-dihydrofolate + NADPH + H(+). The protein operates within cofactor biosynthesis; tetrahydrofolate biosynthesis; 5,6,7,8-tetrahydrofolate from 7,8-dihydrofolate: step 1/1. Key enzyme in folate metabolism. Catalyzes an essential reaction for de novo glycine and purine synthesis, and for DNA precursor synthesis. The polypeptide is Dihydrofolate reductase type 9 (dhfrIX) (Escherichia coli).